An 834-amino-acid chain; its full sequence is DIS3-like exonuclease 2 (834 aa).

Polar residues predominate over residues 1-23 (MHNSEFLSPVQSGTQRGTNRSIL). The interval 1 to 35 (MHNSEFLSPVQSGTQRGTNRSILNNKKSGKGKKKS) is disordered. Mg(2+) is bound by residues D354 and D363.

This sequence belongs to the RNR ribonuclease family. DIS3L2 subfamily. Requires Mg(2+) as cofactor. It depends on Mn(2+) as a cofactor.

It is found in the cytoplasm. The protein localises to the P-body. In terms of biological role, 3'-5'-exoribonuclease that specifically recognizes RNAs polyuridylated at their 3' end and mediates their degradation. Component of an exosome-independent RNA degradation pathway that mediates degradation of both mRNAs and miRNAs that have been polyuridylated by a terminal uridylyltransferase. Essential for correct mitosis, and negatively regulates cell proliferation. This is DIS3-like exonuclease 2 from Xenopus tropicalis (Western clawed frog).